The chain runs to 436 residues: Trigger factor (436 aa).

Residues 161-246 enclose the PPIase FKBP-type domain; it reads EDQLNIDFVG…VNTVSEPKLP (86 aa).

This sequence belongs to the FKBP-type PPIase family. Tig subfamily.

Its subcellular location is the cytoplasm. It catalyses the reaction [protein]-peptidylproline (omega=180) = [protein]-peptidylproline (omega=0). Involved in protein export. Acts as a chaperone by maintaining the newly synthesized protein in an open conformation. Functions as a peptidyl-prolyl cis-trans isomerase. This is Trigger factor from Pseudomonas fluorescens (strain Pf0-1).